The chain runs to 254 residues: Probable phosphatase Sbal223_2880 (254 aa).

Zn(2+)-binding residues include H8, H10, H16, H41, E74, H102, H132, D193, and H195.

It belongs to the PHP family. Zn(2+) serves as cofactor.

The sequence is that of Probable phosphatase Sbal223_2880 from Shewanella baltica (strain OS223).